The primary structure comprises 585 residues: Cytoplasmic polyadenylation element-binding protein 1 (585 aa).

The tract at residues 1–32 (MQHQLKACGDVKTSSRAQQNHRRSTAASAKRS) is disordered. 2 RRM domains span residues 251–356 (RKVF…PWRL) and 373–444 (RTVF…HAET). Residues 513 to 533 (DQTRILPRPPHHPAAHHSHQR) form a disordered region. A compositionally biased stretch (basic residues) spans 521-532 (PPHHPAAHHSHQ).

In terms of assembly, interacts with fbf-1.

In terms of biological role, cytoplasmic polyadenylation element binding protein that binds to and regulates the translation of specific mRNAs. Essential for progression through meiosis. Involved in spermatogenesis. This is Cytoplasmic polyadenylation element-binding protein 1 (cpb-1) from Caenorhabditis briggsae.